Consider the following 261-residue polypeptide: Hydroxyethylthiazole kinase (261 aa).

Met-39 contributes to the substrate binding site. ATP contacts are provided by Arg-115 and Thr-159. Gly-186 contributes to the substrate binding site.

It belongs to the Thz kinase family. Mg(2+) serves as cofactor.

It carries out the reaction 5-(2-hydroxyethyl)-4-methylthiazole + ATP = 4-methyl-5-(2-phosphooxyethyl)-thiazole + ADP + H(+). It participates in cofactor biosynthesis; thiamine diphosphate biosynthesis; 4-methyl-5-(2-phosphoethyl)-thiazole from 5-(2-hydroxyethyl)-4-methylthiazole: step 1/1. Catalyzes the phosphorylation of the hydroxyl group of 4-methyl-5-beta-hydroxyethylthiazole (THZ). This chain is Hydroxyethylthiazole kinase, found in Macrococcus caseolyticus (strain JCSC5402) (Macrococcoides caseolyticum).